Here is a 257-residue protein sequence, read N- to C-terminus: Small ribosomal subunit protein uS15m (257 aa).

A mitochondrion-targeting transit peptide spans 1-57 (MLRVAWRTLSLIRTRAVTQVLVPGLPGGGSAKFPFNQWGLQPRSLLLQAARGYVVRK). A disordered region spans residues 225 to 257 (RALKAAAAAQKQAKRRNPDSPAKAIPKTLKDSQ).

The protein belongs to the universal ribosomal protein uS15 family. Component of the mitochondrial small ribosomal subunit (mt-SSU). Mature mammalian 55S mitochondrial ribosomes consist of a small (28S) and a large (39S) subunit. The 28S small subunit contains a 12S ribosomal RNA (12S mt-rRNA) and 30 different proteins. The 39S large subunit contains a 16S rRNA (16S mt-rRNA), a copy of mitochondrial valine transfer RNA (mt-tRNA(Val)), which plays an integral structural role, and 52 different proteins. Interacts with METTL17.

It localises to the mitochondrion matrix. The sequence is that of Small ribosomal subunit protein uS15m (MRPS15) from Homo sapiens (Human).